The chain runs to 78 residues: Small ribosomal subunit protein bS16c (78 aa).

The protein belongs to the bacterial ribosomal protein bS16 family.

The protein localises to the plastid. Its subcellular location is the chloroplast. The protein is Small ribosomal subunit protein bS16c of Phaeodactylum tricornutum (strain CCAP 1055/1).